Reading from the N-terminus, the 108-residue chain is uncharacterized protein (108 aa).

A disordered region spans residues 1–23; it reads MVDELEKNQVQPQETEENKENAL.

This is an uncharacterized protein from Ureaplasma parvum serovar 3 (strain ATCC 700970).